We begin with the raw amino-acid sequence, 117 residues long: UPF0342 protein LGAS_1451 (117 aa).

The protein belongs to the UPF0342 family.

The chain is UPF0342 protein LGAS_1451 from Lactobacillus gasseri (strain ATCC 33323 / DSM 20243 / BCRC 14619 / CIP 102991 / JCM 1131 / KCTC 3163 / NCIMB 11718 / NCTC 13722 / AM63).